A 293-amino-acid chain; its full sequence is ATP synthase gamma chain (293 aa).

Belongs to the ATPase gamma chain family. As to quaternary structure, F-type ATPases have 2 components, CF(1) - the catalytic core - and CF(0) - the membrane proton channel. CF(1) has five subunits: alpha(3), beta(3), gamma(1), delta(1), epsilon(1). CF(0) has three main subunits: a, b and c.

Its subcellular location is the cell inner membrane. Its function is as follows. Produces ATP from ADP in the presence of a proton gradient across the membrane. The gamma chain is believed to be important in regulating ATPase activity and the flow of protons through the CF(0) complex. The chain is ATP synthase gamma chain from Psychrobacter arcticus (strain DSM 17307 / VKM B-2377 / 273-4).